Reading from the N-terminus, the 358-residue chain is MRERLLAAEKVTAIRWQGGALHLLDQRLLPSQERWLACDNVAQVAAAIRDMVVRGASAIGIAAAYGLVLALEERLAQGGDWEMDLEEDFLTLAEARPTAANLFWALNRMRERLLRLRADEDVLAALEAEAVAIHESDREANLTMSQQGIELIRRHQGNAQALLTYGNAGALASGGFGTALGVIRAGYLEGMVERVYAGETRPWLQGSRLTAWELANEGIPVTLCADSALAHLMKTKGITWVVVGADCIAANGDVASKIGTYQLAVSAMHHGVRFMVVAPSTSIDLNLATGEDIPLEERDADEWLDFGGAPAVPDVEVFNPVFDVTPADLIDVIVTERGIVERPDTAKLAQLICRKRLH.

Residues 54–56 (RGA), arginine 96, and glutamine 205 contribute to the substrate site. Aspartate 246 functions as the Proton donor in the catalytic mechanism. 256–257 (SK) provides a ligand contact to substrate.

Belongs to the eIF-2B alpha/beta/delta subunits family. MtnA subfamily.

It catalyses the reaction 5-(methylsulfanyl)-alpha-D-ribose 1-phosphate = 5-(methylsulfanyl)-D-ribulose 1-phosphate. It functions in the pathway amino-acid biosynthesis; L-methionine biosynthesis via salvage pathway; L-methionine from S-methyl-5-thio-alpha-D-ribose 1-phosphate: step 1/6. In terms of biological role, catalyzes the interconversion of methylthioribose-1-phosphate (MTR-1-P) into methylthioribulose-1-phosphate (MTRu-1-P). In Pseudomonas putida (strain GB-1), this protein is Methylthioribose-1-phosphate isomerase.